A 321-amino-acid chain; its full sequence is tRNA-dihydrouridine synthase B (321 aa).

FMN-binding positions include 16-18 (PMA) and Gln70. Cys100 acts as the Proton donor in catalysis. Residues Lys139, 200-202 (NGD), and 224-225 (GR) contribute to the FMN site.

Belongs to the Dus family. DusB subfamily. The cofactor is FMN.

The catalysed reaction is a 5,6-dihydrouridine in tRNA + NAD(+) = a uridine in tRNA + NADH + H(+). It catalyses the reaction a 5,6-dihydrouridine in tRNA + NADP(+) = a uridine in tRNA + NADPH + H(+). Catalyzes the synthesis of 5,6-dihydrouridine (D), a modified base found in the D-loop of most tRNAs, via the reduction of the C5-C6 double bond in target uridines. This chain is tRNA-dihydrouridine synthase B, found in Pectobacterium carotovorum (Erwinia carotovora).